Reading from the N-terminus, the 239-residue chain is Ribosomal RNA small subunit methyltransferase G (239 aa).

S-adenosyl-L-methionine contacts are provided by residues G77, F82, 128-129 (AE), and R147.

This sequence belongs to the methyltransferase superfamily. RNA methyltransferase RsmG family.

It is found in the cytoplasm. In terms of biological role, specifically methylates the N7 position of guanine in position 535 of 16S rRNA. This chain is Ribosomal RNA small subunit methyltransferase G, found in Bacillus cereus (strain ZK / E33L).